The primary structure comprises 458 residues: Argininosuccinate lyase (458 aa).

The protein belongs to the lyase 1 family. Argininosuccinate lyase subfamily.

The protein resides in the cytoplasm. The enzyme catalyses 2-(N(omega)-L-arginino)succinate = fumarate + L-arginine. Its pathway is amino-acid biosynthesis; L-arginine biosynthesis; L-arginine from L-ornithine and carbamoyl phosphate: step 3/3. The chain is Argininosuccinate lyase from Actinobacillus pleuropneumoniae serotype 7 (strain AP76).